A 155-amino-acid polypeptide reads, in one-letter code: Basic phospholipase A2 PC9 (155 aa).

The signal sequence occupies residues 1 to 21 (MYPAHLLVLLAVCVSLLGASA). The propeptide occupies 22–27 (ISPRPL). Disulfide bonds link cysteine 38-cysteine 98, cysteine 54-cysteine 144, cysteine 56-cysteine 72, cysteine 71-cysteine 125, cysteine 78-cysteine 118, cysteine 87-cysteine 111, and cysteine 105-cysteine 116. 3 residues coordinate Ca(2+): tyrosine 55, glycine 57, and glycine 59. Histidine 75 is an active-site residue. Residue aspartate 76 coordinates Ca(2+). Residue aspartate 119 is part of the active site.

This sequence belongs to the phospholipase A2 family. Group I subfamily. D49 sub-subfamily. Requires Ca(2+) as cofactor. As to expression, expressed by the venom gland.

It localises to the secreted. It catalyses the reaction a 1,2-diacyl-sn-glycero-3-phosphocholine + H2O = a 1-acyl-sn-glycero-3-phosphocholine + a fatty acid + H(+). In terms of biological role, snake venom phospholipase A2 (PLA2) that inhibits neuromuscular transmission by blocking acetylcholine release from the nerve termini. PLA2 catalyzes the calcium-dependent hydrolysis of the 2-acyl groups in 3-sn-phosphoglycerides. This Laticauda colubrina (Yellow-lipped sea krait) protein is Basic phospholipase A2 PC9.